Reading from the N-terminus, the 183-residue chain is Ribosome-recycling factor (183 aa).

This sequence belongs to the RRF family.

Its subcellular location is the cytoplasm. Responsible for the release of ribosomes from messenger RNA at the termination of protein biosynthesis. May increase the efficiency of translation by recycling ribosomes from one round of translation to another. The sequence is that of Ribosome-recycling factor from Bifidobacterium longum subsp. infantis (strain ATCC 15697 / DSM 20088 / JCM 1222 / NCTC 11817 / S12).